The sequence spans 365 residues: Flagellar P-ring protein (365 aa).

An N-terminal signal peptide occupies residues 1–19; it reads MFKALAGIVLALVATLAHA.

Belongs to the FlgI family. In terms of assembly, the basal body constitutes a major portion of the flagellar organelle and consists of four rings (L,P,S, and M) mounted on a central rod.

It localises to the periplasm. The protein resides in the bacterial flagellum basal body. Its function is as follows. Assembles around the rod to form the L-ring and probably protects the motor/basal body from shearing forces during rotation. This is Flagellar P-ring protein from Salmonella heidelberg (strain SL476).